The chain runs to 599 residues: Aspartate--tRNA ligase (599 aa).

An L-aspartate-binding site is contributed by Glu-180. The interval 204 to 207 (QIFK) is aspartate. Arg-226 is an L-aspartate binding site. Residues 226–228 (RDE) and Gln-235 each bind ATP. Residue His-454 participates in L-aspartate binding. An ATP-binding site is contributed by Glu-488. Residue Arg-495 participates in L-aspartate binding. 540–543 (GLDR) contributes to the ATP binding site.

This sequence belongs to the class-II aminoacyl-tRNA synthetase family. Type 1 subfamily. As to quaternary structure, homodimer.

Its subcellular location is the cytoplasm. It catalyses the reaction tRNA(Asp) + L-aspartate + ATP = L-aspartyl-tRNA(Asp) + AMP + diphosphate. Catalyzes the attachment of L-aspartate to tRNA(Asp) in a two-step reaction: L-aspartate is first activated by ATP to form Asp-AMP and then transferred to the acceptor end of tRNA(Asp). The protein is Aspartate--tRNA ligase of Clostridium botulinum (strain Alaska E43 / Type E3).